Consider the following 159-residue polypeptide: Ribosome maturation factor RimP (159 aa).

This sequence belongs to the RimP family.

The protein localises to the cytoplasm. In terms of biological role, required for maturation of 30S ribosomal subunits. The polypeptide is Ribosome maturation factor RimP (Halothermothrix orenii (strain H 168 / OCM 544 / DSM 9562)).